We begin with the raw amino-acid sequence, 131 residues long: Protein FAM107B (131 aa).

A2 is subject to N-acetylalanine. 2 disordered regions span residues 39 to 78 and 100 to 131; these read MNQK…KKKS and KLQE…AQES. N6-acetyllysine is present on K50. A compositionally biased stretch (basic and acidic residues) spans 52-78; sequence ELQKVMEKRKRDQVIKQKEEEAQKKKS. Positions 61-112 form a coiled coil; the sequence is KRDQVIKQKEEEAQKKKSDLEIELLKRQQKLEQLELEKQKLQEEQENAPEFV.

This sequence belongs to the FAM107 family.

This is Protein FAM107B from Homo sapiens (Human).